The primary structure comprises 510 residues: Putative folylpolyglutamate synthase (510 aa).

98-101 (GKGS) provides a ligand contact to ATP. Mg(2+) contacts are provided by serine 122, glutamate 189, and histidine 217. ATP-binding residues include arginine 342 and aspartate 357.

The protein belongs to the folylpolyglutamate synthase family. It depends on a monovalent cation as a cofactor.

It localises to the mitochondrion inner membrane. The protein resides in the mitochondrion matrix. It is found in the cytoplasm. It catalyses the reaction (6S)-5,6,7,8-tetrahydrofolyl-(gamma-L-Glu)(n) + L-glutamate + ATP = (6S)-5,6,7,8-tetrahydrofolyl-(gamma-L-Glu)(n+1) + ADP + phosphate + H(+). It participates in cofactor biosynthesis; tetrahydrofolylpolyglutamate biosynthesis. In terms of biological role, catalyzes conversion of folates to polyglutamate derivatives allowing concentration of folate compounds in the cell and the intracellular retention of these cofactors, which are important substrates for most of the folate-dependent enzymes that are involved in one-carbon transfer reactions involved in purine, pyrimidine and amino acid synthesis. In Caenorhabditis elegans, this protein is Putative folylpolyglutamate synthase.